Here is a 396-residue protein sequence, read N- to C-terminus: LIM/homeobox protein Lhx9 (396 aa).

2 consecutive LIM zinc-binding domains span residues 69–130 (ALCA…RFSV) and 131–193 (QRCA…LIQG). 3 disordered regions span residues 248–272 (ENDA…RMRT), 328–365 (RQEN…TDLT), and 377–396 (SSLD…TNLF). Positions 267 to 326 (TKRMRTSFKHHQLRTMKSYFAINHNPDAKDLKQLAQKTGLTKRVLQVWFQNARAKFRRNV) form a DNA-binding region, homeobox. The span at 352–365 (LTPPSTATTLTDLT) shows a compositional bias: low complexity. The segment covering 384 to 396 (SGSPPQTTLTNLF) has biased composition (polar residues).

Its subcellular location is the nucleus. Functionally, may be involved in gonadal development. The chain is LIM/homeobox protein Lhx9 (lhx9) from Danio rerio (Zebrafish).